The primary structure comprises 551 residues: Membrane protein insertase YidC (551 aa).

The chain crosses the membrane as a helical span at residues 6 to 26 (YFLWGALFISGYLLFLQWSQD). The segment covering 34-50 (SVAQSTQSQSETNSQMS) has biased composition (low complexity). Positions 34–68 (SVAQSTQSQSETNSQMSDDLPMATQSTTEANAEIP) are disordered. Residues 56-68 (ATQSTTEANAEIP) show a composition bias toward polar residues. 5 helical membrane-spanning segments follow: residues 340–360 (TVDY…LTLI), 363–383 (FVIN…AIFF), 433–453 (LGGC…YWVL), 464–484 (FFLW…PILM), and 509–529 (IMPV…VLYW).

The protein belongs to the OXA1/ALB3/YidC family. Type 1 subfamily. In terms of assembly, interacts with the Sec translocase complex via SecD. Specifically interacts with transmembrane segments of nascent integral membrane proteins during membrane integration.

Its subcellular location is the cell inner membrane. Its function is as follows. Required for the insertion and/or proper folding and/or complex formation of integral membrane proteins into the membrane. Involved in integration of membrane proteins that insert both dependently and independently of the Sec translocase complex, as well as at least some lipoproteins. Aids folding of multispanning membrane proteins. The sequence is that of Membrane protein insertase YidC from Marinomonas sp. (strain MWYL1).